Reading from the N-terminus, the 100-residue chain is Large ribosomal subunit protein uL23 (100 aa).

This sequence belongs to the universal ribosomal protein uL23 family. Part of the 50S ribosomal subunit. Contacts protein L29, and trigger factor when it is bound to the ribosome.

In terms of biological role, one of the early assembly proteins it binds 23S rRNA. One of the proteins that surrounds the polypeptide exit tunnel on the outside of the ribosome. Forms the main docking site for trigger factor binding to the ribosome. The sequence is that of Large ribosomal subunit protein uL23 from Prochlorococcus marinus (strain MIT 9313).